The following is a 644-amino-acid chain: Protein DA1-related 6 (644 aa).

UIM domains are found at residues 119–138, 181–200, and 244–263; these read EEDELLARTLEESLKENNRR, DVDEQFAKAVKESLKNKGKG, and DEDEQLAKAVEESLKGKGQI. An LIM zinc-binding domain is found at 284-355; that stretch reads SLCGGCNFAV…YVCKEKKMKT (72 aa). The span at 572-589 shows a compositional bias: low complexity; that stretch reads ASSSASSSSRTPPAASAS. The disordered stretch occupies residues 572–591; it reads ASSSASSSSRTPPAASASKK.

In terms of assembly, interacts with ubiquitin.

Functionally, ubiquitin receptor that probably regulates developmental process. The protein is Protein DA1-related 6 (DAR6) of Arabidopsis thaliana (Mouse-ear cress).